The chain runs to 261 residues: Hemin import ATP-binding protein HmuV (261 aa).

The 237-residue stretch at 7–243 folds into the ABC transporter domain; the sequence is LRGQNLSLQF…EIIDAVYGYK (237 aa). An ATP-binding site is contributed by 39-46; sequence GPNGAGKS.

The protein belongs to the ABC transporter superfamily. Heme (hemin) importer (TC 3.A.1.14.5) family. As to quaternary structure, the complex is composed of two ATP-binding proteins (HmuV), two transmembrane proteins (HmuU) and a solute-binding protein (HmuT).

It is found in the cell inner membrane. Its function is as follows. Part of the ABC transporter complex HmuTUV involved in hemin import. Responsible for energy coupling to the transport system. This Vibrio vulnificus (strain YJ016) protein is Hemin import ATP-binding protein HmuV.